The chain runs to 221 residues: Large ribosomal subunit protein uL3 (221 aa).

This sequence belongs to the universal ribosomal protein uL3 family. In terms of assembly, part of the 50S ribosomal subunit. Forms a cluster with proteins L14 and L19.

Functionally, one of the primary rRNA binding proteins, it binds directly near the 3'-end of the 23S rRNA, where it nucleates assembly of the 50S subunit. In Chlamydia felis (strain Fe/C-56) (Chlamydophila felis), this protein is Large ribosomal subunit protein uL3.